The chain runs to 559 residues: Cocaine esterase (559 aa).

The first 26 residues, 1–26 (MRLHRLRARLSAVACGLLLLLVRGQG), serve as a signal peptide directing secretion. A Pyrrolidone carboxylic acid modification is found at Q27. An intrachain disulfide couples C95 to C123. An N-linked (GlcNAc...) asparagine glycan is attached at N111. S228 serves as the catalytic Acyl-ester intermediate. N-linked (GlcNAc...) asparagine glycosylation is present at N276. The cysteines at positions 280 and 291 are disulfide-linked. Residues E345 and H457 each act as charge relay system in the active site. The short motif at 556–559 (HTEL) is the Prevents secretion from ER element.

The protein belongs to the type-B carboxylesterase/lipase family. As to quaternary structure, monomer. Post-translationally, glycosylated. In terms of tissue distribution, preferentially expressed in intestine with moderate expression in liver. Within the intestine, highest expression is found in small intestine with lower expression in colon and rectum.

It is found in the endoplasmic reticulum lumen. It catalyses the reaction cocaine + H2O = ecgonine methyl ester + benzoate + H(+). The enzyme catalyses a carboxylic ester + H2O = an alcohol + a carboxylate + H(+). It carries out the reaction 4-methylumbelliferyl acetate + H2O = 4-methylumbelliferone + acetate + H(+). The catalysed reaction is 2-(5Z,8Z,11Z,14Z-eicosatetraenoyl)-glycerol + H2O = glycerol + (5Z,8Z,11Z,14Z)-eicosatetraenoate + H(+). It catalyses the reaction prostaglandin E2 1-glyceryl ester + H2O = prostaglandin E2 + glycerol + H(+). The enzyme catalyses prostaglandin F2alpha 1-glyceryl ester + H2O = prostaglandin F2alpha + glycerol + H(+). Functionally, involved in the detoxification of xenobiotics and in the activation of ester and amide prodrugs. Shows high catalytic efficiency for hydrolysis of cocaine, 4-methylumbelliferyl acetate, heroin and 6-monoacetylmorphine. Hydrolyzes aspirin, substrates with large alcohol group and small acyl group and endogenous lipids such as triacylglycerol. Converts monoacylglycerides to free fatty acids and glycerol. Hydrolyzes of 2-arachidonoylglycerol and prostaglandins. This chain is Cocaine esterase, found in Homo sapiens (Human).